The chain runs to 529 residues: Putative E3 ubiquitin-protein ligase ARI4 (529 aa).

Positions 1–22 (MDDEYMSLEEEEDNCYPSEFDD) are enriched in acidic residues. The tract at residues 1–23 (MDDEYMSLEEEEDNCYPSEFDDH) is disordered. The interval 115–327 (KTMKCDICME…IAGHSCGRYK (213 aa)) is TRIAD supradomain. Cys119, Cys122, Cys137, His139, Cys142, Cys145, Cys164, Cys169, Cys206, Cys212, Cys230, Cys232, Cys237, Cys240, His245, Cys250, Cys277, and Cys280 together coordinate Zn(2+). The segment at 119–169 (CDICMEEDLSKYAMTRMECGHRFCNDCWKEHFTVRINEGEGKRIRCMAYKC) adopts an RING-type 1 zinc-finger fold. Residues 186–250 (EKFDRFLIES…LSESHSPCSC (65 aa)) form an IBR-type zinc finger. The segment at 277–305 (CPKCSKPIQKRDGCNHMTCKCGQHFCWLC) adopts an RING-type 2; atypical zinc-finger fold. Cys290 is an active-site residue. Residues Cys295, Cys297, Cys302, Cys305, His313, and Cys323 each coordinate Zn(2+).

The protein belongs to the RBR family. Ariadne subfamily. Zn(2+) serves as cofactor.

The catalysed reaction is [E2 ubiquitin-conjugating enzyme]-S-ubiquitinyl-L-cysteine + [acceptor protein]-L-lysine = [E2 ubiquitin-conjugating enzyme]-L-cysteine + [acceptor protein]-N(6)-ubiquitinyl-L-lysine.. Its pathway is protein modification; protein ubiquitination. In terms of biological role, might act as an E3 ubiquitin-protein ligase, or as part of E3 complex, which accepts ubiquitin from specific E2 ubiquitin-conjugating enzymes and then transfers it to substrates. The chain is Putative E3 ubiquitin-protein ligase ARI4 (ARI4) from Arabidopsis thaliana (Mouse-ear cress).